Here is a 509-residue protein sequence, read N- to C-terminus: Probable aspartic-type endopeptidase CTSD (509 aa).

An N-terminal signal peptide occupies residues 1–21 (MQFLWLCLLSAVTLQFTGTLA). Positions 102-408 (YFSEVKVGSE…DFDKNRVGLA (307 aa)) constitute a Peptidase A1 domain. Residue Asp-120 is part of the active site. Asn-174 is a glycosylation site (N-linked (GlcNAc...) asparagine). Asp-302 is an active-site residue. N-linked (GlcNAc...) asparagine glycosylation occurs at Asn-361. The tract at residues 451 to 489 (NKAPSGGSPGLPAESGSDSTTNGEATNGATSSPNSSSSV) is disordered. Positions 466–480 (GSDSTTNGEATNGAT) are enriched in polar residues. An N-linked (GlcNAc...) asparagine glycan is attached at Asn-484. Ser-485 carries the GPI-anchor amidated serine lipid modification. The propeptide at 486 to 509 (SSSVLTPTWLTLAVFFAIGSSLWS) is removed in mature form.

Belongs to the peptidase A1 family.

The protein localises to the cell membrane. Its function is as follows. Probable GPI-anchored aspartic-type endopeptidase which contributes to virulence. The polypeptide is Probable aspartic-type endopeptidase CTSD (CTSD) (Trichophyton verrucosum (strain HKI 0517)).